We begin with the raw amino-acid sequence, 170 residues long: Glycine cleavage system H protein, mitochondrial (170 aa).

The transit peptide at Met1 to Leu45 directs the protein to the mitochondrion. One can recognise a Lipoyl-binding domain in the interval Ile63 to Thr145. The residue at position 104 (Lys104) is an N6-lipoyllysine.

The protein belongs to the GcvH family. The glycine cleavage system is composed of four proteins: P (GLDC), T (GCST), L (DLD) and H (GCSH). Interacts with GLDC. (R)-lipoate serves as cofactor.

It localises to the mitochondrion. Functionally, the glycine cleavage system catalyzes the degradation of glycine. The H protein (GCSH) shuttles the methylamine group of glycine from the P protein (GLDC) to the T protein (GCST). Has a pivotal role in the lipoylation of enzymes involved in cellular energetics such as the mitochondrial dihydrolipoyllysine-residue acetyltransferase component of pyruvate dehydrogenase complex (DLAT), and the mitochondrial dihydrolipoyllysine-residue succinyltransferase component of 2-oxoglutarate dehydrogenase complex (DLST). This is Glycine cleavage system H protein, mitochondrial from Rattus norvegicus (Rat).